The following is a 72-amino-acid chain: MMLTCQFNDGDTWLGLWLLCAFIVGMLGLLLMHYRAVQGDKHTKCKKCNKHNCNDDYVTMHYTTDGDYIYMN.

This is Probable protein E5B from Homo sapiens (Human).